We begin with the raw amino-acid sequence, 445 residues long: Phosphoglucosamine mutase (445 aa).

Serine 99 acts as the Phosphoserine intermediate in catalysis. Residues serine 99, aspartate 242, aspartate 244, and aspartate 246 each contribute to the Mg(2+) site. Position 99 is a phosphoserine (serine 99).

The protein belongs to the phosphohexose mutase family. Mg(2+) is required as a cofactor. In terms of processing, activated by phosphorylation.

The enzyme catalyses alpha-D-glucosamine 1-phosphate = D-glucosamine 6-phosphate. In terms of biological role, catalyzes the conversion of glucosamine-6-phosphate to glucosamine-1-phosphate. This is Phosphoglucosamine mutase from Helicobacter pylori (strain HPAG1).